We begin with the raw amino-acid sequence, 172 residues long: Centrin-1 (172 aa).

Residues 1–31 form a disordered region; sequence MASGFKKPSAASTGQKRKVAPKPELTEDQKQ. EF-hand domains lie at 28-63, 64-99, 101-136, and 137-172; these read DQKQ…LGFE, PRKE…KMSE, DTKE…LGEN, and LTDE…TSLY. Ca(2+) is bound by residues D41, D43, S45, T47, and E52. The Ca(2+) site is built by D150, D152, D154, E156, and E161.

The protein belongs to the centrin family. In terms of assembly, monomer. Interacts with CIMAP3. Interacts with USP49.

It is found in the cytoplasm. Its subcellular location is the cytoskeleton. It localises to the microtubule organizing center. The protein localises to the centrosome. The protein resides in the cell projection. It is found in the cilium. Plays a fundamental role in microtubule-organizing center structure and function. Plays a role in sperm cilia formation. The protein is Centrin-1 of Homo sapiens (Human).